The following is an 85-amino-acid chain: MNSLLMIIGCLVLIGTVWTKEGYLVNMKTGCKYGCYELGDNGYCDRKCKAESGNYGYCYTVGCWCEGLPNSKPTWPLPGKSCSGK.

An N-terminal signal peptide occupies residues 1-19 (MNSLLMIIGCLVLIGTVWT). The LCN-type CS-alpha/beta domain occupies 20 to 83 (KEGYLVNMKT…TWPLPGKSCS (64 aa)). 4 disulfides stabilise this stretch: Cys-31–Cys-82, Cys-35–Cys-58, Cys-44–Cys-63, and Cys-48–Cys-65. The residue at position 83 (Ser-83) is a Serine amide.

It belongs to the long (4 C-C) scorpion toxin superfamily. Sodium channel inhibitor family. Beta subfamily. Expressed by the venom gland.

Its subcellular location is the secreted. Functionally, beta toxins bind voltage-independently at site-4 of sodium channels (Nav) and shift the voltage of activation toward more negative potentials thereby affecting sodium channel activation and promoting spontaneous and repetitive firing. The protein is Toxin Cll6 of Centruroides limpidus (Mexican scorpion).